A 329-amino-acid polypeptide reads, in one-letter code: MEVAEPSSPTEEEEEEEEHSAEPRPHTRSNPEGAEDRAVAAQASVGSHSEGEGEAASADDGSPSTSGAGPKSWQVPPPAPEVQIRTPRVNCPEKVIICLDLSEEMSLPKLESFNGSKTNALNISQKMIEMFVRTKHKIDKSHEFALVVVNDDTAWLSGLTSDPRELCSCLYDLETASCSTFNLEGLFSLIQQKTEFPVTENVQTIPPPYVVRTILVYSRPPCQPQFSLTEPMKKMFQCPYFFFDLVYIHNGAEEKEEEMSWKDMFAFMGSLDTKGTSYKYEVALAGPALELHNCMVKLLAHPLQRPCQSHASYSLLEEEDEATEVEATV.

An N-acetylmethionine modification is found at Met1. The tract at residues 1–86 (MEVAEPSSPT…PPAPEVQIRT (86 aa)) is disordered. Ser8 carries the phosphoserine modification. Residues 10–19 (TEEEEEEEEH) show a composition bias toward acidic residues. Residues Ser29, Ser49, Ser57, and Ser62 each carry the phosphoserine modification. At Thr65 the chain carries Phosphothreonine. Phosphoserine is present on Ser66. Positions 95-298 (VIICLDLSEE…LELHNCMVKL (204 aa)) are VWFA-like.

Belongs to the BABAM1 family. As to quaternary structure, component of the ARISC complex, at least composed of UIMC1/RAP80, ABRAXAS1, BRCC3/BRCC36, BABAM2 and BABAM1/NBA1. Component of the BRCA1-A complex, at least composed of BRCA1, BARD1, UIMC1/RAP80, ABRAXAS1, BRCC3/BRCC36, BABAM2 and BABAM1/NBA1. In the BRCA1-A complex, interacts directly with ABRAXAS1 and BABAM2. Component of the BRISC complex, at least composed of ABRAXAS2, BRCC3/BRCC36, BABAM2 and BABAM1/NBA1. Identified in a complex with SHMT2 and the other subunits of the BRISC complex.

Its subcellular location is the cytoplasm. The protein resides in the nucleus. Its function is as follows. Component of the BRCA1-A complex, a complex that specifically recognizes 'Lys-63'-linked ubiquitinated histones H2A and H2AX at DNA lesions sites, leading to target the BRCA1-BARD1 heterodimer to sites of DNA damage at double-strand breaks (DSBs). The BRCA1-A complex also possesses deubiquitinase activity that specifically removes 'Lys-63'-linked ubiquitin on histones H2A and H2AX. In the BRCA1-A complex, it is required for the complex integrity and its localization at DSBs. Component of the BRISC complex, a multiprotein complex that specifically cleaves 'Lys-63'-linked ubiquitin in various substrates. In these 2 complexes, it is probably required to maintain the stability of BABAM2 and help the 'Lys-63'-linked deubiquitinase activity mediated by BRCC3/BRCC36 component. The BRISC complex is required for normal mitotic spindle assembly and microtubule attachment to kinetochores via its role in deubiquitinating NUMA1. Plays a role in interferon signaling via its role in the deubiquitination of the interferon receptor IFNAR1; deubiquitination increases IFNAR1 activity by enhancing its stability and cell surface expression. Down-regulates the response to bacterial lipopolysaccharide (LPS) via its role in IFNAR1 deubiquitination. This is BRISC and BRCA1-A complex member 1 (BABAM1) from Callithrix jacchus (White-tufted-ear marmoset).